The sequence spans 408 residues: Neutral cholesterol ester hydrolase 1 (408 aa).

At 1–4 (MRSS) the chain is on the cytoplasmic side. A helical; Signal-anchor for type II membrane protein transmembrane segment spans residues 5–25 (CVLLAALLALAAYYVYIPLPS). The Lumenal segment spans residues 26–408 (AVSDPWKLML…SYIKWLDQNL (383 aa)). Positions 113–115 (HGG) match the Involved in the stabilization of the negatively charged intermediate by the formation of the oxyanion hole motif. Residue serine 191 is part of the active site. Asparagine 270 carries an N-linked (GlcNAc...) asparagine glycan. The active site involves aspartate 348. Residue asparagine 367 is glycosylated (N-linked (GlcNAc...) asparagine). Histidine 378 is a catalytic residue. An N-linked (GlcNAc...) asparagine glycan is attached at asparagine 389.

Belongs to the 'GDXG' lipolytic enzyme family. In terms of processing, N-glycosylated. In terms of tissue distribution, present in brain, heart, kidney, lung, spinal cord and testis but not liver (at protein level). Expressed in peritoneal macrophages and kidney.

It localises to the cell membrane. The protein localises to the microsome. It carries out the reaction a 1-O-alkyl-2-acetyl-sn-glycerol + H2O = a 1-O-alkyl-sn-glycerol + acetate + H(+). The enzyme catalyses 1-O-hexadecyl-2-acetyl-sn-glycerol + H2O = 1-O-hexadecyl-sn-glycerol + acetate + H(+). The catalysed reaction is a cholesterol ester + H2O = cholesterol + a fatty acid + H(+). It catalyses the reaction cholesteryl (9Z-octadecenoate) + H2O = cholesterol + (9Z)-octadecenoate + H(+). With respect to regulation, inhibited by bulky trifluoromethyl ketones. Functionally, hydrolyzes 2-acetyl monoalkylglycerol ether (1-O-alkyl-2-acetyl-sn-glycerol), the penultimate precursor of the pathway for de novo synthesis of platelet-activating factor. May be responsible for the hydrolysis of cholesterol esters (such as cholesteryl (9Z-octadecenoate)) in macrophages. Also involved in organ detoxification by hydrolyzing exogenous organophosphorus compounds. The polypeptide is Neutral cholesterol ester hydrolase 1 (Nceh1) (Mus musculus (Mouse)).